A 469-amino-acid chain; its full sequence is GTPase Der (469 aa).

EngA-type G domains are found at residues 30–193 (PVLA…PEVA) and 203–376 (RRVA…ASWD). GTP-binding positions include 36–43 (GRPNVGKS), 83–87 (DTGGW), 145–148 (NKVD), 209–216 (GKPNVGKS), 256–260 (DTAGL), and 321–324 (NKWD). A KH-like domain is found at 377–459 (TRIPTGPLNS…PIRINVRVRE (83 aa)).

This sequence belongs to the TRAFAC class TrmE-Era-EngA-EngB-Septin-like GTPase superfamily. EngA (Der) GTPase family. Associates with the 50S ribosomal subunit.

Its function is as follows. GTPase that plays an essential role in the late steps of ribosome biogenesis. The chain is GTPase Der from Mycobacterium marinum (strain ATCC BAA-535 / M).